Reading from the N-terminus, the 373-residue chain is Galactoside alpha-(1,2)-fucosyltransferase 1 (373 aa).

At 1-12 the chain is on the cytoplasmic side; sequence MWPPSRRQLCLA. A helical; Signal-anchor for type II membrane protein membrane pass occupies residues 13–29; it reads FLLVCALSAFSFLLHLH. The Lumenal segment spans residues 30–373; the sequence is QDLFRNGLAL…GSWRPWRFLG (344 aa). Residues Asn66, Asn301, and Asn327 are each glycosylated (N-linked (GlcNAc...) asparagine).

The protein belongs to the glycosyltransferase 11 family. Brain.

The protein resides in the golgi apparatus. The protein localises to the golgi stack membrane. It carries out the reaction a beta-D-galactosyl-(1-&gt;4)-N-acetyl-beta-D-glucosaminyl derivative + GDP-beta-L-fucose = an alpha-L-Fuc-(1-&gt;2)-beta-D-Gal-(1-&gt;4)-beta-D-GlcNAc derivative + GDP + H(+). The enzyme catalyses a ganglioside GA1 + GDP-beta-L-fucose = a ganglioside Fuc-GA1 + GDP + H(+). The catalysed reaction is a beta-D-Gal-(1-&gt;3)-beta-D-GlcNAc-(1-&gt;3)-beta-D-Gal-(1-&gt;4)-beta-D-Glc-(1&lt;-&gt;1')-Cer(d18:1(4E)) + GDP-beta-L-fucose = alpha-L-fucosyl-(1-&gt;2)- beta-D-galactosyl-(1-&gt;3)-N-acetyl-beta-D-glucosaminyl-(1-&gt;3)-beta-D-galactosyl-(1-&gt;4)-beta-D-glucosyl-(1&lt;-&gt;1')-N-acylsphing-4-enine + GDP + H(+). It catalyses the reaction a neolactoside nLc4Cer(d18:1(4E)) + GDP-beta-L-fucose = a neolactoside IV(2)-alpha-Fuc-nLc4Cer(d18:1(4E)) + GDP + H(+). It carries out the reaction a ganglioside GM1 + GDP-beta-L-fucose = a ganglioside Fuc-GM1 + GDP + H(+). The enzyme catalyses beta-D-galactosyl-(1-&gt;3)-N-acetyl-D-galactosamine + GDP-beta-L-fucose = alpha-L-fucosyl-(1-&gt;2)-beta-D-galactosyl-(1-&gt;3)-N-acetyl-D-galactosamine + GDP + H(+). It functions in the pathway protein modification; protein glycosylation. Its function is as follows. Catalyzes the transfer of L-fucose, from a guanosine diphosphate-beta-L-fucose, to the terminal galactose residue of glycoconjugates through an alpha(1,2) linkage leading to H antigen synthesis that is an intermediate substrate in the synthesis of ABO blood group antigens. H antigen is essential for maturation of the glomerular layer of the main olfactory bulb, in cell migration and early cell-cell contacts during tumor associated angiogenesis. Preferentially fucosylates soluble lactose and to a lesser extent fucosylates glycolipids gangliosides GA1 and GM1a. The chain is Galactoside alpha-(1,2)-fucosyltransferase 1 from Oryctolagus cuniculus (Rabbit).